We begin with the raw amino-acid sequence, 226 residues long: UPF0502 protein Daci_5373 (226 aa).

This sequence belongs to the UPF0502 family.

The polypeptide is UPF0502 protein Daci_5373 (Delftia acidovorans (strain DSM 14801 / SPH-1)).